Here is a 371-residue protein sequence, read N- to C-terminus: Cytochrome b (371 aa).

The next 4 membrane-spanning stretches (helical) occupy residues 25–45, 69–90, 105–125, and 170–190; these read FGSM…FLAI, WIMQ…YIHI, WLSG…GYVL, and FFAL…IHII. Heme b is bound by residues His75 and His89. Positions 174 and 188 each coordinate heme b. His193 serves as a coordination point for a ubiquinone. The next 4 helical transmembrane spans lie at 218 to 238, 280 to 300, 312 to 332, and 339 to 358; these read YKDT…LSFS, LGGT…PFTH, LAQM…WTAS, and FIII…IMNP.

Belongs to the cytochrome b family. The cytochrome bc1 complex contains 3 respiratory subunits (MT-CYB, CYC1 and UQCRFS1), 2 core proteins (UQCRC1 and UQCRC2) and probably 6 low-molecular weight proteins. Heme b serves as cofactor.

Its subcellular location is the mitochondrion inner membrane. Functionally, component of the ubiquinol-cytochrome c reductase complex (complex III or cytochrome b-c1 complex) that is part of the mitochondrial respiratory chain. The b-c1 complex mediates electron transfer from ubiquinol to cytochrome c. Contributes to the generation of a proton gradient across the mitochondrial membrane that is then used for ATP synthesis. The polypeptide is Cytochrome b (MT-CYB) (Sinomicrurus kelloggi (Kellogg's coral snake)).